A 293-amino-acid chain; its full sequence is N-acetylneuraminate lyase (293 aa).

Residues serine 47 and threonine 48 each coordinate aceneuramate. Catalysis depends on tyrosine 136, which acts as the Proton donor. The active-site Schiff-base intermediate with substrate is the lysine 164. Positions 166, 188, 190, 191, and 207 each coordinate aceneuramate.

This sequence belongs to the DapA family. NanA subfamily. Homotetramer.

It localises to the cytoplasm. It carries out the reaction aceneuramate = aldehydo-N-acetyl-D-mannosamine + pyruvate. It functions in the pathway amino-sugar metabolism; N-acetylneuraminate degradation; D-fructose 6-phosphate from N-acetylneuraminate: step 1/5. In terms of biological role, catalyzes the reversible aldol cleavage of N-acetylneuraminic acid (sialic acid; Neu5Ac) to form pyruvate and N-acetylmannosamine (ManNAc) via a Schiff base intermediate. This Haemophilus influenzae (strain ATCC 51907 / DSM 11121 / KW20 / Rd) protein is N-acetylneuraminate lyase.